The primary structure comprises 268 residues: TATA-box-binding protein (268 aa).

Over residues 1–24 (MDSLTTHPATAQQARAFTSPSSLS) the composition is skewed to polar residues. The segment at 1 to 86 (MDSLTTHPAT…TPAATPGASA (86 aa)) is disordered. A compositionally biased stretch (low complexity) spans 50-86 (NGQSANGNVNGQQQGANAANGNGVMPATPAATPGASA). 2 tandem repeats follow at residues 95–171 (LQNI…ARII) and 185–262 (IQNI…YPVL).

It belongs to the TBP family. Belongs to the TFIID complex together with the TBP-associated factors (TAFs). Binds DNA as monomer.

The protein resides in the nucleus. In terms of biological role, general transcription factor that functions at the core of the DNA-binding multiprotein factor TFIID. Binding of TFIID to the TATA box is the initial transcriptional step of the pre-initiation complex (PIC), playing a role in the activation of eukaryotic genes transcribed by RNA polymerase II. This Emericella nidulans (strain FGSC A4 / ATCC 38163 / CBS 112.46 / NRRL 194 / M139) (Aspergillus nidulans) protein is TATA-box-binding protein (tbpA).